We begin with the raw amino-acid sequence, 157 residues long: Endoribonuclease YbeY (157 aa).

Zn(2+) is bound by residues H114, H118, and H124.

It belongs to the endoribonuclease YbeY family. Requires Zn(2+) as cofactor.

The protein resides in the cytoplasm. Functionally, single strand-specific metallo-endoribonuclease involved in late-stage 70S ribosome quality control and in maturation of the 3' terminus of the 16S rRNA. The chain is Endoribonuclease YbeY from Salmonella dublin (strain CT_02021853).